Reading from the N-terminus, the 503-residue chain is SWI/SNF and RSC complexes subunit ssr2 (503 aa).

The SWIRM domain occupies 18 to 115 (IIVPSYAGWF…YQIDPETRPA (98 aa)). Phosphoserine is present on Ser175. The ZZ-type; degenerate zinc finger occupies 188 to 242 (RVDKVCFTCGVNCSQTWYHNLKNKKYDICPNCYKQGRFSSSFNSSDFLCMDAIDF). Residues Cys193, Cys196, Cys216, and Cys219 each contribute to the Zn(2+) site. The SANT domain occupies 245-296 (DEEKPWSNQETLLLLEAIETYGDDWNQIALHVGSRTKEQCLIHFLQIPIEDP). At Ser306 the chain carries Phosphoserine.

The protein belongs to the SMARCC family. Component of the RSC complex composed of at least arp9, arp42, rsc1, rsc4, rsc7, rsc9, rsc58, sfh1, snf21, ssr1, ssr2, ssr3 and ssr4. The complex interacts with histone and histone variant components of centromeric chromatin. Component of the SWI/SNF global transcription activator complex composed of at least arp9, arp42, snf5, snf22, snf30, sbf59, sol1, ssr1, ssr2, ssr3, ssr4 and tfg3.

The protein localises to the cytoplasm. It is found in the nucleus. In terms of biological role, component of the chromatin structure remodeling complex (RSC), which is involved in transcription regulation and nucleosome positioning. Controls particularly membrane and organelle development genes. Part of the SWI/SNF complex, an ATP-dependent chromatin remodeling complex, required for the positive and negative regulation of gene expression of a large number of genes. It changes chromatin structure by altering DNA-histone contacts within a nucleosome, leading eventually to a change in nucleosome position, thus facilitating or repressing binding of gene-specific transcription factors. This chain is SWI/SNF and RSC complexes subunit ssr2 (ssr2), found in Schizosaccharomyces pombe (strain 972 / ATCC 24843) (Fission yeast).